Reading from the N-terminus, the 114-residue chain is Putative neurotoxin 7 (114 aa).

The protein belongs to the scolopendra neurotoxin 8 family. Post-translationally, contains 3 disulfide bonds. As to expression, expressed by the venom gland.

It localises to the secreted. The protein is Putative neurotoxin 7 of Scolopendra mutilans (Chinese red-headed centipede).